A 95-amino-acid chain; its full sequence is Protein NCBP2AS2 homolog (95 aa).

This is Protein NCBP2AS2 homolog from Ixodes scapularis (Black-legged tick).